Consider the following 544-residue polypeptide: uncharacterized protein (544 aa).

Transmembrane regions (helical) follow at residues 41 to 61, 71 to 91, 106 to 126, 166 to 186, 196 to 216, 240 to 260, 280 to 300, 332 to 352, 391 to 411, 413 to 433, 451 to 471, and 484 to 504; these read FSAW…PSFA, AGTP…QCVA, GLYY…AAWL, YQIF…SSMP, WGTV…LAVA, WSNG…MSGY, AIVM…LCIA, VALT…CMVA, VVGI…NAIF, VGAI…VFFV, INGY…CFPQ, and WTCV…FVSA.

This sequence belongs to the amino acid-polyamine-organocation (APC) superfamily.

It is found in the membrane. This is an uncharacterized protein from Schizosaccharomyces pombe (strain 972 / ATCC 24843) (Fission yeast).